The chain runs to 470 residues: Cysteine--tRNA ligase (470 aa).

Cys27 lines the Zn(2+) pocket. The 'HIGH' region motif lies at 29–39; that stretch reads PTVYNFFHIGN. Residues Cys211, His236, and Glu240 each coordinate Zn(2+). The short motif at 268 to 272 is the 'KMSKS' region element; sequence KMSKS. Lys271 is an ATP binding site.

This sequence belongs to the class-I aminoacyl-tRNA synthetase family. Monomer. Zn(2+) is required as a cofactor.

It localises to the cytoplasm. The enzyme catalyses tRNA(Cys) + L-cysteine + ATP = L-cysteinyl-tRNA(Cys) + AMP + diphosphate. The chain is Cysteine--tRNA ligase from Clostridium botulinum (strain Alaska E43 / Type E3).